A 149-amino-acid polypeptide reads, in one-letter code: Large ribosomal subunit protein uL13 (149 aa).

The protein belongs to the universal ribosomal protein uL13 family. In terms of assembly, part of the 50S ribosomal subunit.

This protein is one of the early assembly proteins of the 50S ribosomal subunit, although it is not seen to bind rRNA by itself. It is important during the early stages of 50S assembly. The polypeptide is Large ribosomal subunit protein uL13 (Chlorobium limicola (strain DSM 245 / NBRC 103803 / 6330)).